Consider the following 509-residue polypeptide: Aspartyl/glutamyl-tRNA(Asn/Gln) amidotransferase subunit B (509 aa).

It belongs to the GatB/GatE family. GatB subfamily. As to quaternary structure, heterotrimer of A, B and C subunits.

The catalysed reaction is L-glutamyl-tRNA(Gln) + L-glutamine + ATP + H2O = L-glutaminyl-tRNA(Gln) + L-glutamate + ADP + phosphate + H(+). It carries out the reaction L-aspartyl-tRNA(Asn) + L-glutamine + ATP + H2O = L-asparaginyl-tRNA(Asn) + L-glutamate + ADP + phosphate + 2 H(+). Its function is as follows. Allows the formation of correctly charged Asn-tRNA(Asn) or Gln-tRNA(Gln) through the transamidation of misacylated Asp-tRNA(Asn) or Glu-tRNA(Gln) in organisms which lack either or both of asparaginyl-tRNA or glutaminyl-tRNA synthetases. The reaction takes place in the presence of glutamine and ATP through an activated phospho-Asp-tRNA(Asn) or phospho-Glu-tRNA(Gln). The polypeptide is Aspartyl/glutamyl-tRNA(Asn/Gln) amidotransferase subunit B (Psychrobacter cryohalolentis (strain ATCC BAA-1226 / DSM 17306 / VKM B-2378 / K5)).